Reading from the N-terminus, the 348-residue chain is Inosamine-phosphate amidinotransferase 1 (348 aa).

Catalysis depends on residues aspartate 179 and histidine 227. The active-site Amidino-cysteine intermediate is the cysteine 332.

It belongs to the amidinotransferase family. Homodimer.

It catalyses the reaction 1-amino-1-deoxy-scyllo-inositol 4-phosphate + L-arginine = 1-guanidino-1-deoxy-scyllo-inositol 4-phosphate + L-ornithine. Its pathway is antibiotic biosynthesis; streptomycin biosynthesis. Its function is as follows. Catalyzes two non-consecutive transamidination reactions. It converts scyllo-inosamine 4-phosphate into N-amidino-scyllo-inosamine 4-phosphate and N1-amidinostreptamine 6-phosphate into streptidine 6-phosphate. The sequence is that of Inosamine-phosphate amidinotransferase 1 (strB1) from Streptomyces glaucescens.